A 287-amino-acid polypeptide reads, in one-letter code: Eukaryotic translation initiation factor 3 subunit F (287 aa).

An MPN domain is found at 12–142 (VRVHPVVLFQ…IKAYVCVSLG (131 aa)).

This sequence belongs to the eIF-3 subunit F family. As to quaternary structure, component of the eukaryotic translation initiation factor 3 (eIF-3) complex.

It is found in the cytoplasm. Functionally, component of the eukaryotic translation initiation factor 3 (eIF-3) complex, which is involved in protein synthesis of a specialized repertoire of mRNAs and, together with other initiation factors, stimulates binding of mRNA and methionyl-tRNAi to the 40S ribosome. The eIF-3 complex specifically targets and initiates translation of a subset of mRNAs involved in cell proliferation. This chain is Eukaryotic translation initiation factor 3 subunit F, found in Anopheles gambiae (African malaria mosquito).